A 402-amino-acid polypeptide reads, in one-letter code: Propionate kinase (402 aa).

Positions 11 and 18 each coordinate ATP. Asparagine 11 is a Mg(2+) binding site. Arginine 86 is a binding site for substrate. Catalysis depends on aspartate 143, which acts as the Proton donor/acceptor. Residues histidine 175, 203–207 (HLGNG), 278–280 (DLR), and 326–330 (GIGEN) contribute to the ATP site.

The protein belongs to the acetokinase family. TdcD subfamily. Homodimer. Mg(2+) serves as cofactor.

It carries out the reaction propanoate + ATP = propanoyl phosphate + ADP. It participates in amino-acid degradation; L-threonine degradation via propanoate pathway; propanoate from L-threonine: step 4/4. In terms of biological role, catalyzes the conversion of propionyl phosphate and ADP to propionate and ATP. This Edwardsiella piscicida protein is Propionate kinase.